A 135-amino-acid chain; its full sequence is ATP synthase epsilon chain (135 aa).

The protein belongs to the ATPase epsilon chain family. F-type ATPases have 2 components, CF(1) - the catalytic core - and CF(0) - the membrane proton channel. CF(1) has five subunits: alpha(3), beta(3), gamma(1), delta(1), epsilon(1). CF(0) has three main subunits: a, b and c.

Its subcellular location is the cellular thylakoid membrane. Its function is as follows. Produces ATP from ADP in the presence of a proton gradient across the membrane. The sequence is that of ATP synthase epsilon chain from Prochlorococcus marinus (strain MIT 9211).